Reading from the N-terminus, the 81-residue chain is Small cysteine-rich protein 6 (81 aa).

The N-terminal stretch at 1–23 is a signal peptide; the sequence is MDTKVACLLLIILGALTVQGAVS. A propeptide spanning residues 24–25 is cleaved from the precursor; the sequence is GN.

This sequence belongs to the Cnidaria small cysteine-rich protein (SCRiP) family. beta subfamily. Contains 4 disulfide bonds.

Its subcellular location is the secreted. The protein resides in the nematocyst. In terms of biological role, induces neurotoxic symptoms on zebrafish. Has also been claimed to be implied in calcification, but tests on homolog proteins suggest that proteins of this family have a neurotoxic function and not a calcification function. This is Small cysteine-rich protein 6 from Orbicella faveolata (Mountainous star coral).